An 899-amino-acid chain; its full sequence is Plasma membrane ATPase (899 aa).

Residues 1 to 72 (MSAATEPTKE…TDPSYGLTSD (72 aa)) are disordered. The Cytoplasmic segment spans residues 1 to 96 (MSAATEPTKE…SEETENLFVK (96 aa)). A compositionally biased stretch (acidic residues) spans 17–29 (DSDDEDEDIDQLI). The chain crosses the membrane as a helical span at residues 97–117 (FLMFFIGPIQFVMEAAAILAA). At 118–121 (GLED) the chain is on the extracellular side. A helical transmembrane segment spans residues 122–141 (WVDFGVICGLLFLNAAVGFI). Residues 142-272 (QEYQAGSIVD…GSGHFTEVLN (131 aa)) are Cytoplasmic-facing. Residues 273–294 (GIGTILLILVIVTLLLVWVASF) form a helical membrane-spanning segment. The Extracellular segment spans residues 295–305 (YRTNKIVRILR). Residues 306-328 (YTLAITIVGVPVGLPAVVTTTMA) form a helical membrane-spanning segment. Residues 329 to 700 (VGAAYLAKKQ…IAILNRSLNI (372 aa)) are Cytoplasmic-facing. Residue Asp359 is the 4-aspartylphosphate intermediate of the active site. The Mg(2+) site is built by Asp615 and Asp619. A helical transmembrane segment spans residues 701-719 (DLVVFIAIFADVATLAIAY). At 720 to 735 (DNAPYSPKPVKWNLRR) the chain is on the extracellular side. Residues 736 to 755 (LWGMSVILGIILAIGTWITL) traverse the membrane as a helical segment. The Cytoplasmic segment spans residues 756-805 (TTMFVPKGGIIQNFGSIDGVLFLQISLTENWLIFITRAAGPFWSSIPSWQ). Residues 806–826 (LSGAVLIVDIIATMFCLFGWW) form a helical membrane-spanning segment. The Extracellular segment spans residues 827–838 (SQNWNDIVTVVR). Residues 839-855 (VWIFSFGVFCVMGGAYY) form a helical membrane-spanning segment. The Cytoplasmic portion of the chain corresponds to 856–899 (MMSESEAFDRFMNGKSRRDKPSGRSVEDFLMAMQRVSTQHEKEN).

Belongs to the cation transport ATPase (P-type) (TC 3.A.3) family. Type IIIA subfamily.

Its subcellular location is the cell membrane. The enzyme catalyses ATP + H2O + H(+)(in) = ADP + phosphate + 2 H(+)(out). With respect to regulation, activated by high pH or also by potassium ions when the medium pH is low. Its function is as follows. The plasma membrane ATPase of plants and fungi is a hydrogen ion pump. The proton gradient it generates drives the active transport of nutrients by H(+)-symport. The resulting external acidification and/or internal alkinization may mediate growth responses. The chain is Plasma membrane ATPase (PMA1) from Kluyveromyces lactis (strain ATCC 8585 / CBS 2359 / DSM 70799 / NBRC 1267 / NRRL Y-1140 / WM37) (Yeast).